The primary structure comprises 448 residues: Solute carrier family 52, riboflavin transporter, member 1 (448 aa).

The next 5 helical transmembrane spans lie at 14-34 (LLVALFGMGSWAAVNGIWVEL), 47-67 (LPSYLSVVVALGNLGLLVVTL), 79-99 (VPIQVVQVLSVVGTALLAPLW), 124-144 (ACCTSNVTFLPFLSHLPPPFL), and 147-167 (FFLGQGLSALLPCVLALVQGV). N178 carries an N-linked (GlcNAc...) asparagine glycan. A helical membrane pass occupies residues 191–211 (FPASTFFWALTALLVTSAAAF). The segment at 225 to 267 (TTGGSGPELQLGSPGAEEEEKEEEEALPLQEPPSQAAGTIPGP) is disordered. A compositionally biased stretch (acidic residues) spans 240 to 250 (AEEEEKEEEEA). A run of 5 helical transmembrane segments spans residues 280–300 (AFLLGLMAFTSAVTNGVLPSV), 315–335 (LAVVLGSAANPLACFLAMGVL), 342–362 (LVGLSLLGMLFGAYLMALAIL), 369–389 (VGTTAGVVLVVLSWVLCLCVF), and 407–427 (ALLAAGVAIQVGSLLGAGAMF).

This sequence belongs to the riboflavin transporter family. As to expression, widely expressed. Highly expressed in the testis, placenta and small intestine. Expressed at lower level in other tissues.

It is found in the cell membrane. The enzyme catalyses riboflavin(in) = riboflavin(out). With respect to regulation, the activity is strongly inhibited by riboflavin analogs, such as lumiflavin. Weakly inhibited by flavin adenine dinucleotide (FAD). Its function is as follows. Plasma membrane transporter mediating the uptake by cells of the water soluble vitamin B2/riboflavin that plays a key role in biochemical oxidation-reduction reactions of the carbohydrate, lipid, and amino acid metabolism. Humans are unable to synthesize vitamin B2/riboflavin and must obtain it via intestinal absorption. Functionally, (Microbial infection) May function as a cell receptor to retroviral envelopes similar to the porcine endogenous retrovirus (PERV-A). This is Solute carrier family 52, riboflavin transporter, member 1 from Homo sapiens (Human).